Here is a 372-residue protein sequence, read N- to C-terminus: MSSPEKKRKKNQKSSPNPSLPEDLIVSILARVSRSYYTNLSVVSKTFRSILTSPELYKTRTLLGKPETFLYVCLRFPDEANPRWLILYRKPNQTLTKKKKKKEDSSVHLLAPIPILNSPTVEWSSLVAVGSYLYAITADIKDSPCSNVWYLDCRTHTWLDSPRLRLAHINSDFNGRTYFPGSSEKPDSLNCVEVYNTNTQTWNPVPPQKRKLKFGNMEGKIYIPPCQENHRKAVALNPKVLTWEAVGLGTNLDRGSFCMIGNIAYCYDPSGKFRWMNCNTAEGDWSRLEGLEGLPKFARYSTVKLAEYGGKLVVLWDKYVAASGYKEKMIWCAEISLEKRNSEEIWGKVEWFDAVLTVPKSYKFVCAKSATV.

Residues 14–60 (SSPNPSLPEDLIVSILARVSRSYYTNLSVVSKTFRSILTSPELYKTR) form the F-box domain. One copy of the Kelch repeat lies at 176–222 (RTYFPGSSEKPDSLNCVEVYNTNTQTWNPVPPQKRKLKFGNMEGKIY).

In Arabidopsis thaliana (Mouse-ear cress), this protein is F-box/kelch-repeat protein At5g48990.